The sequence spans 283 residues: D-alanine aminotransferase (283 aa).

Substrate is bound at residue Tyr-32. Arg-51 lines the pyridoxal 5'-phosphate pocket. Arg-99 and His-101 together coordinate substrate. Catalysis depends on Lys-146, which acts as the Proton acceptor. Lys-146 carries the post-translational modification N6-(pyridoxal phosphate)lysine. Glu-178 is a binding site for pyridoxal 5'-phosphate.

This sequence belongs to the class-IV pyridoxal-phosphate-dependent aminotransferase family. In terms of assembly, homodimer. Requires pyridoxal 5'-phosphate as cofactor.

The enzyme catalyses D-alanine + 2-oxoglutarate = D-glutamate + pyruvate. In terms of biological role, acts on the D-isomers of alanine, leucine, aspartate, glutamate, aminobutyrate, norvaline and asparagine. The enzyme transfers an amino group from a substrate D-amino acid to the pyridoxal phosphate cofactor to form pyridoxamine and an alpha-keto acid in the first half-reaction. The second half-reaction is the reverse of the first, transferring the amino group from the pyridoxamine to a second alpha-keto acid to form the product D-amino acid via a ping-pong mechanism. This is an important process in the formation of D-alanine and D-glutamate, which are essential bacterial cell wall components. This chain is D-alanine aminotransferase (dat), found in Lysinibacillus sphaericus (Bacillus sphaericus).